The sequence spans 726 residues: Catalase-peroxidase (726 aa).

Positions 91-214 form a cross-link, tryptophyl-tyrosyl-methioninium (Trp-Tyr) (with M-240); it reads WHSAGTYRIA…LGAVQMGLIY (124 aa). The active-site Proton acceptor is the His-92. A cross-link (tryptophyl-tyrosyl-methioninium (Tyr-Met) (with W-91)) is located at residues 214–240; sequence YVNPEGPNGNPDPLAAARDIRETFARM. Residue His-255 participates in heme b binding. A disordered region spans residues 335 to 362; the sequence is AHQWRPKAGAGADSVPDPHDPNKRRTPS.

This sequence belongs to the peroxidase family. Peroxidase/catalase subfamily. In terms of assembly, homodimer or homotetramer. It depends on heme b as a cofactor. In terms of processing, formation of the three residue Trp-Tyr-Met cross-link is important for the catalase, but not the peroxidase activity of the enzyme.

The enzyme catalyses H2O2 + AH2 = A + 2 H2O. It carries out the reaction 2 H2O2 = O2 + 2 H2O. Its function is as follows. Bifunctional enzyme with both catalase and broad-spectrum peroxidase activity. In Pseudomonas fluorescens (strain ATCC BAA-477 / NRRL B-23932 / Pf-5), this protein is Catalase-peroxidase.